The following is a 272-amino-acid chain: HTH-type transcriptional repressor AllR (272 aa).

Positions 1 to 20 are disordered; sequence MTEVRRRGRPGQQEPSAQKG. One can recognise an HTH iclR-type domain in the interval 21-83; that stretch reads AQALERGIAI…SQLGWWHIGL (63 aa). A DNA-binding region (H-T-H motif) is located at residues 43–62; that stretch reads VSDISLNLDLPLSTTFRLLK. Residues 98–267 enclose the IclR-ED domain; that stretch reads VLSVGGPFMR…ARNISTALGL (170 aa). Residues 154-156, Asp207, Cys217, and 234-236 contribute to the glyoxylate site; these read SGA and SIS.

Negative regulator of allantoin and glyoxylate utilization operons. Binds to the gcl promoter and to the allS-allA intergenic region. This is HTH-type transcriptional repressor AllR (allR) from Klebsiella pneumoniae.